The chain runs to 402 residues: Sensor protein kinase FleS (402 aa).

The Histidine kinase domain occupies 188 to 393; that stretch reads SLAHQIRTPL…CATLILPLIP (206 aa). Histidine 191 carries the post-translational modification Phosphohistidine; by autocatalysis.

The enzyme catalyses ATP + protein L-histidine = ADP + protein N-phospho-L-histidine.. Member of the two-component regulatory system FleS/FleR that regulates the expression of multiple genes involved in flagellar synthesis, adhesion, swarming, motility and antibiotic resistance. May function as a membrane-associated protein kinase that phosphorylates FleR in response to environmental signals leading to activation of specific gene promoters. In Pseudomonas aeruginosa (strain ATCC 15692 / DSM 22644 / CIP 104116 / JCM 14847 / LMG 12228 / 1C / PRS 101 / PAO1), this protein is Sensor protein kinase FleS (fleS).